A 244-amino-acid polypeptide reads, in one-letter code: MGPPSAAPRGGHRPWQGLLITASLLTFWHPPTTVQFTIEALPSSAAEGKDVLLLACNISETIQAYYWHKGKTAEGSPLIAGYITDIQANIPGAAYSGRETVYPNGSLLFQNITLEDAGSYTLRTINASYDSDQATGQLHVHQNNVPGLPVGAVAGIVTGVLVGVALVAALVCFLLLSRTGRASIQRDLREQPPPASTPGHGPSHRSTFSAPLPSPRTATPIYEELLYSDANIYCQIDHKADVVS.

The first 35 residues, 1–35 (MGPPSAAPRGGHRPWQGLLITASLLTFWHPPTTVQ), serve as a signal peptide directing secretion. An Ig-like V-type domain is found at 36-139 (FTIEALPSSA…DSDQATGQLH (104 aa)). Over 36-155 (FTIEALPSSA…PGLPVGAVAG (120 aa)) the chain is Extracellular. N-linked (GlcNAc...) asparagine glycosylation is found at asparagine 57, asparagine 104, asparagine 111, and asparagine 126. A helical transmembrane segment spans residues 156–176 (IVTGVLVGVALVAALVCFLLL). Residues 177-244 (SRTGRASIQR…QIDHKADVVS (68 aa)) are Cytoplasmic-facing. Positions 186–215 (RDLREQPPPASTPGHGPSHRSTFSAPLPSP) are disordered. Residues 222–236 (YEELLYSDANIYCQI) carry the ITAM motif.

This sequence belongs to the immunoglobulin superfamily. CEA family. Interacts through its phosphorylated ITAM domain with the SH2 domain-containing cytoplasmic proteins involved in signaling processes during phagocytosis. In terms of processing, N-glycosylated. The cytoplasmic ITAM-like sequence becomes tyrosine phosphorylated by SRC family PTKs upon ligand-mediated receptor clustering and allows to initiate phagocytosis of bound ligand. Granulocytes.

Its subcellular location is the membrane. In terms of biological role, granulocyte orphan receptor that acts as an trigger efficient phagocytosis of attached particles. The polypeptide is Cell adhesion molecule CEACAM4 (Homo sapiens (Human)).